Reading from the N-terminus, the 272-residue chain is Cytochrome b-c1 complex subunit Rieske-2, mitochondrial (272 aa).

The transit peptide at Met-1 to Phe-60 directs the protein to the mitochondrion. Topologically, residues Ser-61–Arg-109 are mitochondrial matrix. Residues Ala-110 to Leu-132 form a helical membrane-spanning segment. Residues Lys-133–Gly-272 lie on the Mitochondrial intermembrane side of the membrane. The 89-residue stretch at Ile-182–Leu-270 folds into the Rieske domain. [2Fe-2S] cluster contacts are provided by Cys-215, His-217, Cys-234, and His-237. Cys-220 and Cys-236 are oxidised to a cystine.

The protein belongs to the Rieske iron-sulfur protein family. As to quaternary structure, component of the ubiquinol-cytochrome c oxidoreductase (cytochrome b-c1 complex, complex III, CIII), a multisubunit enzyme composed of 3 respiratory subunits cytochrome b, cytochrome c1 and Rieske protein, 2 core protein subunits, and several low-molecular weight protein subunits. The complex exists as an obligatory dimer and forms supercomplexes (SCs) in the inner mitochondrial membrane with cytochrome c oxidase (complex IV, CIV). It depends on [2Fe-2S] cluster as a cofactor. In terms of tissue distribution, high levels are seen in the flowers while a low level expression is seen in the roots, leaves and stems.

Its subcellular location is the mitochondrion inner membrane. The catalysed reaction is a quinol + 2 Fe(III)-[cytochrome c](out) = a quinone + 2 Fe(II)-[cytochrome c](out) + 2 H(+)(out). Functionally, component of the ubiquinol-cytochrome c oxidoreductase, a multisubunit transmembrane complex that is part of the mitochondrial electron transport chain which drives oxidative phosphorylation. The respiratory chain contains 3 multisubunit complexes succinate dehydrogenase (complex II, CII), ubiquinol-cytochrome c oxidoreductase (cytochrome b-c1 complex, complex III, CIII) and cytochrome c oxidase (complex IV, CIV), that cooperate to transfer electrons derived from NADH and succinate to molecular oxygen, creating an electrochemical gradient over the inner membrane that drives transmembrane transport and the ATP synthase. The cytochrome b-c1 complex catalyzes electron transfer from ubiquinol to cytochrome c, linking this redox reaction to translocation of protons across the mitochondrial inner membrane, with protons being carried across the membrane as hydrogens on the quinol. In the process called Q cycle, 2 protons are consumed from the matrix, 4 protons are released into the intermembrane space and 2 electrons are passed to cytochrome c. The Rieske protein is a catalytic core subunit containing a [2Fe-2S] iron-sulfur cluster. It cycles between 2 conformational states during catalysis to transfer electrons from the quinol bound in the Q(0) site in cytochrome b to cytochrome c1. This is Cytochrome b-c1 complex subunit Rieske-2, mitochondrial from Nicotiana tabacum (Common tobacco).